The sequence spans 261 residues: Putative [LysW]-aminoadipate/[LysW]-glutamate kinase (261 aa).

Residues glycine 35–glycine 36, arginine 62, and asparagine 162 each bind substrate.

It belongs to the acetylglutamate kinase family. LysZ subfamily.

It is found in the cytoplasm. It catalyses the reaction [amino-group carrier protein]-C-terminal-N-(1,4-dicarboxybutan-1-yl)-L-glutamine + ATP = [amino-group carrier protein]-C-terminal-N-(1-carboxy-5-phosphooxy-5-oxopentan-1-yl)-L-glutamine + ADP. The catalysed reaction is [amino-group carrier protein]-C-terminal-gamma-(L-glutamyl)-L-glutamate + ATP = [amino-group carrier protein]-C-terminal-gamma-(5-phospho-L-glutamyl)-L-glutamate + ADP. The protein operates within amino-acid biosynthesis; L-lysine biosynthesis via AAA pathway; L-lysine from L-alpha-aminoadipate (Thermus route): step 2/5. It functions in the pathway amino-acid biosynthesis; L-arginine biosynthesis. Functionally, involved in both the arginine and lysine biosynthetic pathways. Phosphorylates the LysW-bound precursors glutamate (for arginine biosynthesis), respectively alpha-aminoadipate (for lysine biosynthesis). The sequence is that of Putative [LysW]-aminoadipate/[LysW]-glutamate kinase from Pyrobaculum islandicum (strain DSM 4184 / JCM 9189 / GEO3).